Reading from the N-terminus, the 251-residue chain is MFKVIICDDERIIREGLKQMVPWEDYHFTTVYTAKDGVEALSLIRQHQPELVITDIRMPRKNGVDLLDDIKDLDCQIIILSSYDDFEYMKAGIQHHVLDYLLKPVDHTQLEHILDILVQRLLERPHSTNDDAAYHTAFQPLLKIDYDDYYVNQILSQIKQHYHKKVTVLDLINPIDVSESYAMRTFKEHVGITIVDYLNRYRILKSLHLLDQHYKHYEIAEKVGFSEYKMFCYHFKKYLHMSPSDYNKQSK.

The Response regulatory domain occupies 3 to 118; sequence KVIICDDERI…QLEHILDILV (116 aa). Aspartate 55 is subject to 4-aspartylphosphate. In terms of domain architecture, HTH araC/xylS-type spans 152–249; the sequence is NQILSQIKQH…HMSPSDYNKQ (98 aa). 2 DNA-binding regions (H-T-H motif) span residues 169–190 and 216–239; these read LDLINPIDVSESYAMRTFKEHV and HYEIAEKVGFSEYKMFCYHFKKYL.

In terms of processing, phosphorylated by SERP2405.

Its subcellular location is the cytoplasm. In terms of biological role, probable member of the two-component regulatory system SERP2405/SERP2406. This is an uncharacterized protein from Staphylococcus epidermidis (strain ATCC 35984 / DSM 28319 / BCRC 17069 / CCUG 31568 / BM 3577 / RP62A).